A 436-amino-acid chain; its full sequence is Anaerobic glycerol-3-phosphate dehydrogenase subunit B (436 aa).

The protein belongs to the anaerobic G-3-P dehydrogenase subunit B family. In terms of assembly, composed of a catalytic GlpA/B dimer and of membrane bound GlpC. FMN serves as cofactor.

It catalyses the reaction a quinone + sn-glycerol 3-phosphate = dihydroxyacetone phosphate + a quinol. The protein operates within polyol metabolism; glycerol degradation via glycerol kinase pathway; glycerone phosphate from sn-glycerol 3-phosphate (anaerobic route): step 1/1. Its function is as follows. Conversion of glycerol 3-phosphate to dihydroxyacetone. Uses fumarate or nitrate as electron acceptor. The chain is Anaerobic glycerol-3-phosphate dehydrogenase subunit B from Vibrio cholerae serotype O1 (strain ATCC 39315 / El Tor Inaba N16961).